Consider the following 430-residue polypeptide: ATP-dependent RNA helicase cgh-1 (430 aa).

The Q motif signature appears at 43–71 (VEFEDFCLGRDLLMGIFEKGWEKPSPIQE). The Helicase ATP-binding domain occupies 74 to 244 (IGVALTGQDI…QKHMHKPYEI (171 aa)). 87–94 (AKNGTGKT) provides a ligand contact to ATP. The DEAD box signature appears at 192–195 (DEAD). A Helicase C-terminal domain is found at 254 to 414 (GVTQYYAFVQ…PIPKTVDPKL (161 aa)).

Belongs to the DEAD box helicase family. DDX6/DHH1 subfamily. In terms of assembly, interacts with car-1 in a germline ribonucleoprotein complex. Interacts with ifet-1. Interacts with oma-1, which is a component of a ribonucleoprotein complex, in an RNA-dependent manner. In terms of tissue distribution, expression is restricted to two germline precursors Z2 and Z3 in L1 stage hermaphrodites, and is detectable specifically in the gonad at low levels into the L3 stage. Expression is significantly higher during the early L4 stage. In adults, expression remains gonad-specific and was not apparent in the somatically derived uterus. Expressed in germ granules (P granules); when associated with pgl-1.

The protein localises to the cytoplasm. It carries out the reaction ATP + H2O = ADP + phosphate + H(+). Probable RNA helicase required for oocyte and sperm function. Also required to prevent the physiological germline apoptosis mechanism killing essentially all developing oocytes. In Caenorhabditis elegans, this protein is ATP-dependent RNA helicase cgh-1 (cgh-1).